Here is a 79-residue protein sequence, read N- to C-terminus: Quinohemoprotein amine dehydrogenase subunit gamma (79 aa).

The segment at residues 7–16 (CTATTDPGWE) is a cross-link (4-cysteinyl-glutamic acid (Cys-Glu)). 2 cross-links (3-cysteinyl-aspartic acid (Cys-Asp)) span residues 27-33 (CQPMEAD) and 41-49 (CWWPAQVPD). Asp33 acts as the Proton acceptor in catalysis. Residues 37-43 (CSDPCWW) constitute a cross-link (4'-cysteinyl-tryptophylquinone (Cys-Trp)). Tryptophylquinone is present on Trp43.

This sequence belongs to the quinohemoprotein amine dehydrogenase subunit gamma family. As to quaternary structure, heterotrimer of an alpha, a beta and a gamma subunit. Cysteine tryptophylquinone residue is required as a cofactor. The cysteine tryptophylquinone (CTQ) is generated by oxidation of the indole ring of a tryptophan residue to form tryptophylquinone, followed by covalent cross-linking with a cysteine residue.

Its subcellular location is the periplasm. The catalysed reaction is an aliphatic amine + A + H2O = an aldehyde + AH2 + NH4(+). Its function is as follows. Catalyzes the oxidative deamination of a wide range of aliphatic monoamines and diamines. The physiological electron acceptor is an azurin-like blue protein. The sequence is that of Quinohemoprotein amine dehydrogenase subunit gamma (qhnDH) from Pseudomonas putida (strain ATCC 47054 / DSM 6125 / CFBP 8728 / NCIMB 11950 / KT2440).